We begin with the raw amino-acid sequence, 64 residues long: Conotoxin LiC121 (64 aa).

An N-terminal signal peptide occupies residues M1–A22. Positions H23–I48 are excised as a propeptide.

It belongs to the conotoxin T superfamily. Contains 2 disulfide bonds that can be either 'C1-C3, C2-C4' or 'C1-C4, C2-C3', since these disulfide connectivities have been observed for conotoxins with cysteine framework V (for examples, see AC P0DQQ7 and AC P81755). In terms of tissue distribution, expressed by the venom duct.

It localises to the secreted. The chain is Conotoxin LiC121 from Conus lividus (Livid cone).